The chain runs to 166 residues: Lipoprotein signal peptidase (166 aa).

Transmembrane regions (helical) follow at residues 9–29 (ASGALAPWLGISLIVILFDQL), 45–65 (ALTSFFNLVLVYNRGAAFGFL), 71–91 (WQRWAFTALGVGATLVICFLL), and 100–120 (FSLSLALILGGALGNVIDRLV). Active-site residues include Asp126 and Asp144. A helical membrane pass occupies residues 135 to 155 (WHFPAFNLADSAITIGAVLLI).

Belongs to the peptidase A8 family.

It localises to the cell inner membrane. The enzyme catalyses Release of signal peptides from bacterial membrane prolipoproteins. Hydrolyzes -Xaa-Yaa-Zaa-|-(S,diacylglyceryl)Cys-, in which Xaa is hydrophobic (preferably Leu), and Yaa (Ala or Ser) and Zaa (Gly or Ala) have small, neutral side chains.. Its pathway is protein modification; lipoprotein biosynthesis (signal peptide cleavage). Functionally, this protein specifically catalyzes the removal of signal peptides from prolipoproteins. In Burkholderia multivorans (strain ATCC 17616 / 249), this protein is Lipoprotein signal peptidase.